Consider the following 727-residue polypeptide: NADH-ubiquinone oxidoreductase 75 kDa subunit, mitochondrial (727 aa).

A mitochondrion-targeting transit peptide spans Met1–Thr23. One can recognise a 2Fe-2S ferredoxin-type domain in the interval Asn30–Lys108. [2Fe-2S] cluster-binding residues include Cys64, Cys75, and Cys78. Position 84 is an N6-acetyllysine (Lys84). Cys92 lines the [2Fe-2S] cluster pocket. Residues Lys108–Gly147 form the 4Fe-4S His(Cys)3-ligated-type domain. His124, Cys128, Cys131, Cys137, Cys176, Cys179, Cys182, and Cys226 together coordinate [4Fe-4S] cluster. Residues Thr245–Arg301 enclose the 4Fe-4S Mo/W bis-MGD-type domain. Ser461 carries the post-translational modification Phosphoserine. 3 positions are modified to N6-acetyllysine: Lys467, Lys499, and Lys709.

The protein belongs to the complex I 75 kDa subunit family. In terms of assembly, core subunit of respiratory chain NADH dehydrogenase (Complex I) which is composed of 45 different subunits. This is the largest subunit of complex I and it is a component of the iron-sulfur (IP) fragment of the enzyme. Complex I associates with ubiquinol-cytochrome reductase complex (Complex III) to form supercomplexes. In astrocytes, less complex I is assembled into supercomplexes as compared to neurons. Interacts with MDM2. Interacts with AKAP1. It depends on [2Fe-2S] cluster as a cofactor. [4Fe-4S] cluster serves as cofactor. Acetylation of Lys-84 is observed in liver mitochondria from fasted mice but not from fed mice. In terms of tissue distribution, brain. More abundant in neurons than in astrocytes (at protein level).

The protein resides in the mitochondrion inner membrane. The catalysed reaction is a ubiquinone + NADH + 5 H(+)(in) = a ubiquinol + NAD(+) + 4 H(+)(out). Its function is as follows. Core subunit of the mitochondrial membrane respiratory chain NADH dehydrogenase (Complex I) which catalyzes electron transfer from NADH through the respiratory chain, using ubiquinone as an electron acceptor. Essential for catalysing the entry and efficient transfer of electrons within complex I. Plays a key role in the assembly and stability of complex I and participates in the association of complex I with ubiquinol-cytochrome reductase complex (Complex III) to form supercomplexes. This Mus musculus (Mouse) protein is NADH-ubiquinone oxidoreductase 75 kDa subunit, mitochondrial (Ndufs1).